Consider the following 24-residue polypeptide: Probable caffeoyl-CoA O-methyltransferase (24 aa).

The protein belongs to the class I-like SAM-binding methyltransferase superfamily. Cation-dependent O-methyltransferase family. CCoAMT subfamily. Requires a divalent metal cation as cofactor.

It carries out the reaction (E)-caffeoyl-CoA + S-adenosyl-L-methionine = (E)-feruloyl-CoA + S-adenosyl-L-homocysteine + H(+). Its pathway is aromatic compound metabolism; phenylpropanoid biosynthesis. Functionally, methylates caffeoyl-CoA to feruloyl-CoA and 5-hydroxyferuloyl-CoA to sinapoyl-CoA. Plays a role in the synthesis of feruloylated polysaccharides. Involved in the reinforcement of the plant cell wall. Also involved in the responding to wounding or pathogen challenge by the increased formation of cell wall-bound ferulic acid polymers. This is Probable caffeoyl-CoA O-methyltransferase from Pinus pinaster (Maritime pine).